A 1257-amino-acid chain; its full sequence is MMCEVMPTINEDTPMSQRGSQSSGSDSDSHFEQLMVNMLDERDRLLDTLRETQESLSLAQQRLQDVIYDRDSLQRQLNSALPQDIESLTGGLTGSKGADPPEFAALTKELNACREQLLEKEEEISELKAERNNTRLLLEHLECLVSRHERSLRMTVVKRQAQSPSGVSSEVEVLKALKSLFEHHKALDEKVRERLRVSLERVSALEEELAAANQEIVALREQNVHIQRKMVSSEGSTESEHLEGMEAGQKVHEKRLSNGSIDSTDDTSQIVELQELLEKQNYEMAQMKERLTALSSRVGEVEQEAETARKDLIKTEEMNTKYQRDIREAMAQKEDMEERITTLEKRYLSAQRESTSIHDMNDKLENELANKEAILRQMEEKNRQLQERLELAEQKLQQTMRKAETLPEVEAELAQRIAALTKAEERHGNIEERMRHLEGQLEEKNQELQRARQREKMNEEHNKRLSDTVDRLLTESNERLQLHLKERMAALEEKNVLIQESENFRKNLEESLHDKVSLAEEIEKLRSELDQMKMRTGSLIEPTISRTHIDTSTELRYSVGSLVDSQSDYRTTKVIRRPRRGRMGVRRDEPKVKSLGDHEWNRTQQIGVLGSHPFESDTEMSDIDDDDRETIFSSMDLLSPSGHSDAQTLAMMLQEQLDAINKEIRLIQEEKESTELRAEEIENRVASVSLEGLNLARVHPGTSITASVTASSLASSSPPSGHSTPKLTPRSPAREMDRMGVMTLPSDLRKHRRKIAVVEEDGREDKATIKCETSPPPTPRAVRMTHTLPSSYHNDARSSLSASLEPDSLGLGSANSSQDSLHKAPKKKGIKSSIGRLFGKKEKARLGQLRGFMETEAAAQESLGLGKLGTQAEKDRRLKKKHELLEEARRKGLPFAQWDGPTVVAWLELWLGMPAWYVAACRANVKSGAIMSALSDTEIQREIGISNPLHRLKLRLAIQEMVSLTSPSAPPTSRTPSGNVWVTHEEMENLTAPAKTKESEEGSWAQCPVFLQTLAYGDMNHEWIGNEWLPSLGLPQYRSYFMECLVDARMLDHLTKKDLRVHLKMVDSFHRTSLQYGIMCLKRLNYDRKELERRREASQHEIKDVLVWSNDRVIRWIQAIGLREYANNILESGVHGSLIALDENFDYSSLALLLQIPTQNTQARQILEREYNNLLALGTERRLDESDDKNFRRGSTWRRQFPPREVHGISMMPGSSETLPAGFRLTTTSGQSRKMTTDVASSRLQRLDNSTVRTYSC.

Residues 1-29 form a disordered region; the sequence is MMCEVMPTINEDTPMSQRGSQSSGSDSDS. Over residues 16–26 the composition is skewed to low complexity; that stretch reads SQRGSQSSGSD. Coiled-coil stretches lie at residues 29-154 and 185-235; these read SHFE…SLRM and KALD…SSEG. S236 carries the post-translational modification Phosphoserine. Residue T237 is modified to Phosphothreonine. A Phosphoserine modification is found at S239. Coiled coils occupy residues 264–541 and 643–695; these read TDDT…SLIE and HSDA…GLNL. Residues 439 to 463 are disordered; that stretch reads GQLEEKNQELQRARQREKMNEEHNK. Phosphoserine occurs at positions 687 and 689. The span at 709–725 shows a compositional bias: low complexity; sequence TASSLASSSPPSGHSTP. Disordered stretches follow at residues 709–738 and 759–834; these read TASSLASSSPPSGHSTPKLTPRSPAREMDR and EEDG…KSSI. Polar residues predominate over residues 787-802; the sequence is TLPSSYHNDARSSLSA. Phosphoserine is present on residues S817 and S820. 3 SAM domains span residues 898–964, 1020–1084, and 1108–1177; these read WDGP…MVSL, NHEW…LKRL, and WSND…LLAL. Residues 1081–1107 are a coiled coil; that stretch reads LKRLNYDRKELERRREASQHEIKDVLV.

The protein belongs to the liprin family. Liprin-alpha subfamily. Forms homodimers and heterodimers with liprins-alpha and liprins-beta. Interacts with the second PTPase domain of PTPRD, PTPRF and PTPRS. Interacts with KIF1A; the interaction decreases in presence of calcium.

Its subcellular location is the cytoplasm. The protein localises to the cell surface. It is found in the cell projection. The protein resides in the dendritic spine. Alters PTPRF cellular localization and induces PTPRF clustering. May regulate the disassembly of focal adhesions. May localize receptor-like tyrosine phosphatases type 2A at specific sites on the plasma membrane, possibly regulating their interaction with the extracellular environment and their association with substrates. In neuronal cells, is a scaffolding protein in the dendritic spines which acts as immobile postsynaptic post able to recruit KIF1A-driven dense core vesicles to dendritic spines. The sequence is that of Liprin-alpha-2 (Ppfia2) from Mus musculus (Mouse).